An 86-amino-acid chain; its full sequence is Co-chaperonin GroES (86 aa).

Belongs to the GroES chaperonin family. Heptamer of 7 subunits arranged in a ring. Interacts with the chaperonin GroEL.

The protein resides in the cytoplasm. In terms of biological role, together with the chaperonin GroEL, plays an essential role in assisting protein folding. The GroEL-GroES system forms a nano-cage that allows encapsulation of the non-native substrate proteins and provides a physical environment optimized to promote and accelerate protein folding. GroES binds to the apical surface of the GroEL ring, thereby capping the opening of the GroEL channel. The chain is Co-chaperonin GroES from Campylobacter lari (strain RM2100 / D67 / ATCC BAA-1060).